Here is a 146-residue protein sequence, read N- to C-terminus: Ribonuclease P protein component (146 aa).

Belongs to the RnpA family. In terms of assembly, consists of a catalytic RNA component (M1 or rnpB) and a protein subunit.

It catalyses the reaction Endonucleolytic cleavage of RNA, removing 5'-extranucleotides from tRNA precursor.. In terms of biological role, RNaseP catalyzes the removal of the 5'-leader sequence from pre-tRNA to produce the mature 5'-terminus. It can also cleave other RNA substrates such as 4.5S RNA. The protein component plays an auxiliary but essential role in vivo by binding to the 5'-leader sequence and broadening the substrate specificity of the ribozyme. This is Ribonuclease P protein component from Helicobacter hepaticus (strain ATCC 51449 / 3B1).